Consider the following 520-residue polypeptide: Transactivator/viroplasmin protein (520 aa).

Positions 486 to 520 (VQDASADSGPKDGPPPTRSIVEKEDVPTTSSKQVD) are disordered.

It belongs to the caulimoviridae viroplasmin family.

It is found in the host cytoplasm. In terms of biological role, enhances the ribosomal termination-reinitiation event leading to the translation of major open reading frames on the polycistronic viral RNAs. The chain is Transactivator/viroplasmin protein from Cauliflower mosaic virus (strain BBC) (CaMV).